The primary structure comprises 121 residues: Large ribosomal subunit protein uL18 (121 aa).

This sequence belongs to the universal ribosomal protein uL18 family. In terms of assembly, part of the 50S ribosomal subunit; part of the 5S rRNA/L5/L18/L25 subcomplex. Contacts the 5S and 23S rRNAs.

This is one of the proteins that bind and probably mediate the attachment of the 5S RNA into the large ribosomal subunit, where it forms part of the central protuberance. The polypeptide is Large ribosomal subunit protein uL18 (Geobacter metallireducens (strain ATCC 53774 / DSM 7210 / GS-15)).